The chain runs to 160 residues: E3 ubiquitin ligase complex SCF subunit sconC (160 aa).

Residues 101–160 are interaction with the F-box domain of F-box proteins; sequence ILAANYLDIKALLDVGCKTVANMIKGKSPEEIRKTFNIQNDFTPEEEDQIRRENEWAEDR.

Belongs to the SKP1 family. In terms of assembly, component of the SCF (SKP1-CUL1-F-box protein) E3 ubiquitin ligase complexes.

The protein operates within protein modification; protein ubiquitination. Essential component of the SCF (SKP1-CUL1-F-box protein) E3 ubiquitin ligase complexes, which mediate the ubiquitination and subsequent proteasomal degradation of target proteins. Controls sulfur metabolite repression, probably by mediating the inactivation or degradation of the metR transcription factor. The chain is E3 ubiquitin ligase complex SCF subunit sconC (sconC) from Talaromyces marneffei (strain ATCC 18224 / CBS 334.59 / QM 7333) (Penicillium marneffei).